A 131-amino-acid polypeptide reads, in one-letter code: Lymphocyte antigen 6C2 (131 aa).

Positions 1–26 are cleaved as a signal peptide; sequence MDSTHATKSCLLILLVALLCAGRAQG. The 90-residue stretch at 27-116 folds into the UPAR/Ly6 domain; the sequence is LQCYECYGVP…TAGSTWTMAG (90 aa). Disulfide bonds link Cys29–Cys53, Cys32–Cys41, Cys46–Cys74, Cys78–Cys95, and Cys96–Cys101. A lipid anchor (GPI-anchor amidated glycine) is attached at Gly109. A propeptide spans 110-131 (removed in mature form); sequence STWTMAGVLLFSLSSVILQTLL.

It localises to the cell membrane. In Mus musculus (Mouse), this protein is Lymphocyte antigen 6C2 (Ly6c2).